A 698-amino-acid polypeptide reads, in one-letter code: Colicin V secretion/processing ATP-binding protein CvaB (698 aa).

A Peptidase C39 domain is found at 26-145 (QTETAECGLA…RYFTGVALEV (120 aa)). Cys-32 is an active-site residue. 7 helical membrane-spanning segments follow: residues 33-53 (GLAC…LIYL), 92-112 (VLKT…LVSV), 176-196 (LAKI…MPVG), 211-231 (GLLT…AATS), 289-311 (TSVI…MLLY), 315-334 (LTWI…LVTY), and 412-432 (IVIL…IGMF). The ABC transmembrane type-1 domain maps to 176-458 (LAKIFCLSVV…LTSFLLQLRI (283 aa)). The ABC transporter domain occupies 492–698 (LETNGLSYRY…LRTVDRVISI (207 aa)). 526-533 (GASGAGKT) is an ATP binding site.

It belongs to the ABC transporter superfamily. Colicin V exporter (TC 3.A.1.110.2) family.

The protein resides in the cell membrane. Involved, in conjunction with CvaA, in the secretion of colicin V. The protein is Colicin V secretion/processing ATP-binding protein CvaB (cvaB) of Escherichia coli.